The sequence spans 121 residues: Phosphoribosyl-AMP cyclohydrolase (121 aa).

Asp76 serves as a coordination point for Mg(2+). Residue Cys77 participates in Zn(2+) binding. Residues Asp78 and Asp80 each contribute to the Mg(2+) site. Zn(2+) is bound by residues Cys93 and Cys100.

The protein belongs to the PRA-CH family. In terms of assembly, homodimer. The cofactor is Mg(2+). Requires Zn(2+) as cofactor.

The protein localises to the cytoplasm. The catalysed reaction is 1-(5-phospho-beta-D-ribosyl)-5'-AMP + H2O = 1-(5-phospho-beta-D-ribosyl)-5-[(5-phospho-beta-D-ribosylamino)methylideneamino]imidazole-4-carboxamide. It participates in amino-acid biosynthesis; L-histidine biosynthesis; L-histidine from 5-phospho-alpha-D-ribose 1-diphosphate: step 3/9. Functionally, catalyzes the hydrolysis of the adenine ring of phosphoribosyl-AMP. In Paracoccus denitrificans (strain Pd 1222), this protein is Phosphoribosyl-AMP cyclohydrolase.